Consider the following 426-residue polypeptide: Serine--tRNA ligase (426 aa).

The segment covering 1–15 (MIDVKDLSENPDKFR) has biased composition (basic and acidic residues). A disordered region spans residues 1-22 (MIDVKDLSENPDKFRASQRARG). An L-serine-binding site is contributed by 228-230 (TSE). Residues 259–261 (RRE) and Val275 contribute to the ATP site. Glu282 is an L-serine binding site. 346–349 (ELTS) is an ATP binding site. Residue Thr386 coordinates L-serine.

This sequence belongs to the class-II aminoacyl-tRNA synthetase family. Type-1 seryl-tRNA synthetase subfamily. In terms of assembly, homodimer. The tRNA molecule binds across the dimer.

Its subcellular location is the cytoplasm. The enzyme catalyses tRNA(Ser) + L-serine + ATP = L-seryl-tRNA(Ser) + AMP + diphosphate + H(+). It carries out the reaction tRNA(Sec) + L-serine + ATP = L-seryl-tRNA(Sec) + AMP + diphosphate + H(+). Its pathway is aminoacyl-tRNA biosynthesis; selenocysteinyl-tRNA(Sec) biosynthesis; L-seryl-tRNA(Sec) from L-serine and tRNA(Sec): step 1/1. Its function is as follows. Catalyzes the attachment of serine to tRNA(Ser). Is also able to aminoacylate tRNA(Sec) with serine, to form the misacylated tRNA L-seryl-tRNA(Sec), which will be further converted into selenocysteinyl-tRNA(Sec). This is Serine--tRNA ligase from Pseudarthrobacter chlorophenolicus (strain ATCC 700700 / DSM 12829 / CIP 107037 / JCM 12360 / KCTC 9906 / NCIMB 13794 / A6) (Arthrobacter chlorophenolicus).